The primary structure comprises 636 residues: Transcription termination factor FttA (636 aa).

Positions 3–70 are KHa; sequence SEMLEEIKRT…IIIRSDRSVL (68 aa). Residues 71–138 are KHb; it reads MDPEKAIRKI…WAPKILRTPP (68 aa). The metallo-beta-lactamase N-terminus stretch occupies residues 179–383; it reads WARLTAMGGF…LVMESTYGGH (205 aa). Zn(2+) contacts are provided by His242, His244, Asp246, His247, His329, and Asp352. Residues 384 to 577 form a beta-Casp region; that stretch reads EDVQPSRNRA…MNIKTIEGFS (194 aa). The tract at residues 578 to 636 is metallo-beta-lactamase C-terminus; sequence GHSDRRQLMEYVKRISPKPEKILLCHGDNYKTLDLASSIYRTYRIETKTPLNLETVRIQ. His603 is a binding site for Zn(2+).

The protein belongs to the metallo-beta-lactamase superfamily. RNA-metabolizing metallo-beta-lactamase-like family. FttA subfamily. Homodimer. Interacts with RNA polymerase (RNAP), interacts with the Spt4-Spt5 complex. Does not seem to interact with the RNA degrading exosome. The cofactor is Zn(2+).

Its activity is regulated as follows. Most active at 0.5 M or 0.7 M NaCl, less active at 1.0 M NaCl. Nuclease activity is inhibited by N,N,Tetrakis-(2-pyridylmethyl)-ethylene diamine (TPEN), a specific chelator of zinc ions. In terms of biological role, terminates transcription on the whole genome. Termination is linked to FttA-mediated RNA cleavage and does not require NTP hydrolysis. Cleaves endonucleolytically at the RNA exit channel of RNA polymerase (RNAP); the 5'-3' exonuclease activity of this protein degrades the nascent RNA released from RNAP. Its function is as follows. An RNA nuclease, it bind single-stranded RNA (ssRNA) with a preference for U-rich sequences. This chain is Transcription termination factor FttA, found in Methanothermobacter thermautotrophicus (strain ATCC 29096 / DSM 1053 / JCM 10044 / NBRC 100330 / Delta H) (Methanobacterium thermoautotrophicum).